Reading from the N-terminus, the 359-residue chain is Serpentine receptor class epsilon-13 (359 aa).

The next 7 helical transmembrane spans lie at 33-53 (YLFV…YYLL), 74-94 (AIYL…ILLI), 111-131 (ISLF…AFVA), 150-170 (WLVG…ALDF), 180-200 (VTIF…NFLL), 237-257 (LALS…IDNL), and 266-286 (LNTV…PFVI).

This sequence belongs to the nematode receptor-like protein sre family.

The protein localises to the membrane. The protein is Serpentine receptor class epsilon-13 (sre-13) of Caenorhabditis elegans.